The primary structure comprises 427 residues: Glutamate-1-semialdehyde 2,1-aminomutase (427 aa).

At Lys-265 the chain carries N6-(pyridoxal phosphate)lysine.

Belongs to the class-III pyridoxal-phosphate-dependent aminotransferase family. HemL subfamily. In terms of assembly, homodimer. Pyridoxal 5'-phosphate serves as cofactor.

The protein resides in the cytoplasm. The catalysed reaction is (S)-4-amino-5-oxopentanoate = 5-aminolevulinate. The protein operates within porphyrin-containing compound metabolism; protoporphyrin-IX biosynthesis; 5-aminolevulinate from L-glutamyl-tRNA(Glu): step 2/2. The protein is Glutamate-1-semialdehyde 2,1-aminomutase of Pseudomonas paraeruginosa (strain DSM 24068 / PA7) (Pseudomonas aeruginosa (strain PA7)).